The chain runs to 320 residues: ATP-dependent 6-phosphofructokinase (320 aa).

Residue Gly12 coordinates ATP. Residues 22–26 (RGVVR) and 55–60 (RYSVSD) contribute to the ADP site. ATP is bound by residues 73-74 (RF) and 103-106 (GDGS). A Mg(2+)-binding site is contributed by Asp104. Position 126 to 128 (126 to 128 (TID)) interacts with substrate. Catalysis depends on Asp128, which acts as the Proton acceptor. Arg155 is a binding site for ADP. Residues Arg163 and 170–172 (MGR) each bind substrate. ADP-binding positions include 186 to 188 (GCE), Lys212, and 214 to 216 (KKH). Residues Glu223, Arg244, and 250–253 (HIQR) each bind substrate.

It belongs to the phosphofructokinase type A (PFKA) family. ATP-dependent PFK group I subfamily. Prokaryotic clade 'B1' sub-subfamily. Homotetramer. Mg(2+) serves as cofactor.

It is found in the cytoplasm. It carries out the reaction beta-D-fructose 6-phosphate + ATP = beta-D-fructose 1,6-bisphosphate + ADP + H(+). Its pathway is carbohydrate degradation; glycolysis; D-glyceraldehyde 3-phosphate and glycerone phosphate from D-glucose: step 3/4. With respect to regulation, allosterically activated by ADP and other diphosphonucleosides, and allosterically inhibited by phosphoenolpyruvate. Catalyzes the phosphorylation of D-fructose 6-phosphate to fructose 1,6-bisphosphate by ATP, the first committing step of glycolysis. The polypeptide is ATP-dependent 6-phosphofructokinase (Salmonella gallinarum (strain 287/91 / NCTC 13346)).